Here is a 27-residue protein sequence, read N- to C-terminus: Putative phosphoglycerate kinase (27 aa).

It belongs to the phosphoglycerate kinase family. In terms of assembly, monomer. Mg(2+) serves as cofactor.

It carries out the reaction (2R)-3-phosphoglycerate + ATP = (2R)-3-phospho-glyceroyl phosphate + ADP. The polypeptide is Putative phosphoglycerate kinase (Pinus strobus (Eastern white pine)).